Reading from the N-terminus, the 224-residue chain is Germin-like protein 8-4 (224 aa).

An N-terminal signal peptide occupies residues 1–23; that stretch reads MASSSSLYLLAALLALASWQAIA. An intrachain disulfide couples C33 to C48. Residues 70 to 213 enclose the Cupin type-1 domain; the sequence is STMNKVGSNV…AFQVEKKVID (144 aa). N78 carries N-linked (GlcNAc...) asparagine glycosylation. H111, H113, E118, and H158 together coordinate Mn(2+).

This sequence belongs to the germin family. In terms of assembly, oligomer (believed to be a pentamer but probably hexamer).

The protein resides in the secreted. It localises to the extracellular space. Its subcellular location is the apoplast. Functionally, plays a role in broad-spectrum disease resistance. Probably has no oxalate oxidase activity even if the active site is conserved. This is Germin-like protein 8-4 (GER1) from Oryza sativa subsp. japonica (Rice).